Reading from the N-terminus, the 934-residue chain is Protein translocase subunit SecA (934 aa).

ATP is bound by residues Gln-87, 105-109 (GEGKT), and Asp-515. Positions 918, 920, 929, and 930 each coordinate Zn(2+).

This sequence belongs to the SecA family. Monomer and homodimer. Part of the essential Sec protein translocation apparatus which comprises SecA, SecYEG and auxiliary proteins SecDF-YajC and YidC. Zn(2+) serves as cofactor.

It localises to the cell inner membrane. The protein resides in the cytoplasm. The enzyme catalyses ATP + H2O + cellular proteinSide 1 = ADP + phosphate + cellular proteinSide 2.. In terms of biological role, part of the Sec protein translocase complex. Interacts with the SecYEG preprotein conducting channel. Has a central role in coupling the hydrolysis of ATP to the transfer of proteins into and across the cell membrane, serving both as a receptor for the preprotein-SecB complex and as an ATP-driven molecular motor driving the stepwise translocation of polypeptide chains across the membrane. The protein is Protein translocase subunit SecA of Ralstonia pickettii (strain 12J).